A 637-amino-acid polypeptide reads, in one-letter code: MNRVFRNTIFYLLILLVVIGVVSYFQTSNPKTENMSYSTFIKNLDDGKVDSVSVQPVRGVYEVKGQLKNYDKDQYFLTHVPEGKGADQIFNALKKTDVKVEPAQETSGWVTFLTTIIPFVIIFILFFFLLNQAQGGGSRVMNFGKSKAKLYTEEKKRVKFKDVAGADEEKQELVEVVEFLKDPRKFAELGARIPKGVLLVGPPGTGKTLLAKACAGEAGVPFFSISGSDFVEMFVGVGASRVRDLFENAKKNAPCLIFIDEIDAVGRQRGAGLGGGHDEREQTLNQLLVEMDGFSANEGIIIIAATNRADILDPALLRPGRFDRQITVDRPDVIGREAVLKVHARNKPLDETVNLKSIAMRTPGFSGADLENLLNEAALVAARQNKKKIDARDIDEATDRVIAGPAKKSRVISKKERNIVAYHEGGHTVIGLVLDEADMVHKVTIVPRGQAGGYAVMLPREDRYFQTKPELLDKIVGLLGGRVAEEIIFGEVSTGAHNDFQRATNIARRMVTEFGMSEKLGPLQFGQSQGGQVFLGRDFNNEQNYSDQIAYEIDQEIQRIIKECYERAKQILTENRDKLELIAQTLLKVETLDAEQIKHLIDHGTLPERNFSDDEKNDDVKVNILTKTEEKKDDTKE.

At Met-1–Asn-7 the chain is on the cytoplasmic side. The chain crosses the membrane as a helical span at residues Thr-8–Ser-28. At Asn-29–Trp-109 the chain is on the extracellular side. A helical membrane pass occupies residues Val-110 to Leu-130. The Cytoplasmic segment spans residues Asn-131–Glu-637. Position 201 to 208 (Gly-201 to Thr-208) interacts with ATP. His-423 lines the Zn(2+) pocket. Residue Glu-424 is part of the active site. The Zn(2+) site is built by His-427 and Asp-499. A not necessary for FtsH function region spans residues Phe-514–Glu-637.

This sequence in the central section; belongs to the AAA ATPase family. In the C-terminal section; belongs to the peptidase M41 family. As to quaternary structure, homohexamer. Interacts with FloT at midcell. Interacts with FloA at midcell. Another study shows only minor colocalization with FloA or FloT. Requires Zn(2+) as cofactor.

The protein resides in the cell membrane. Its subcellular location is the membrane raft. Its function is as follows. Acts as a processive, ATP-dependent zinc metallopeptidase for both cytoplasmic and membrane proteins. Plays a role in the quality control of integral membrane proteins. In terms of biological role, in vitro partially degrades Spo0E, the phosphatase that acts on Spo0A-P. Recognition requires the last 14 residues of Spo0E. Its stabile accumulation requires FlotA and Flot. May degrade EzrA. In Bacillus subtilis (strain 168), this protein is ATP-dependent zinc metalloprotease FtsH.